Reading from the N-terminus, the 315-residue chain is Aspartate carbamoyltransferase catalytic subunit (315 aa).

The carbamoyl phosphate site is built by arginine 65 and threonine 66. Residue lysine 93 participates in L-aspartate binding. Residues arginine 115, histidine 145, and glutamine 148 each coordinate carbamoyl phosphate. L-aspartate contacts are provided by arginine 179 and arginine 234. Positions 275 and 276 each coordinate carbamoyl phosphate.

Belongs to the aspartate/ornithine carbamoyltransferase superfamily. ATCase family. In terms of assembly, heterododecamer (2C3:3R2) of six catalytic PyrB chains organized as two trimers (C3), and six regulatory PyrI chains organized as three dimers (R2).

It catalyses the reaction carbamoyl phosphate + L-aspartate = N-carbamoyl-L-aspartate + phosphate + H(+). The protein operates within pyrimidine metabolism; UMP biosynthesis via de novo pathway; (S)-dihydroorotate from bicarbonate: step 2/3. Functionally, catalyzes the condensation of carbamoyl phosphate and aspartate to form carbamoyl aspartate and inorganic phosphate, the committed step in the de novo pyrimidine nucleotide biosynthesis pathway. This is Aspartate carbamoyltransferase catalytic subunit from Xanthomonas euvesicatoria pv. vesicatoria (strain 85-10) (Xanthomonas campestris pv. vesicatoria).